We begin with the raw amino-acid sequence, 265 residues long: Thymidylate synthase (265 aa).

Residue R21 coordinates dUMP. H51 lines the (6R)-5,10-methylene-5,6,7,8-tetrahydrofolate pocket. 127 to 128 (RR) lines the dUMP pocket. C147 (nucleophile) is an active-site residue. DUMP is bound by residues 167 to 170 (RSAD), N178, and 208 to 210 (HLY). (6R)-5,10-methylene-5,6,7,8-tetrahydrofolate is bound at residue D170. S264 provides a ligand contact to (6R)-5,10-methylene-5,6,7,8-tetrahydrofolate.

Belongs to the thymidylate synthase family. Bacterial-type ThyA subfamily. As to quaternary structure, homodimer.

Its subcellular location is the cytoplasm. The enzyme catalyses dUMP + (6R)-5,10-methylene-5,6,7,8-tetrahydrofolate = 7,8-dihydrofolate + dTMP. Its pathway is pyrimidine metabolism; dTTP biosynthesis. Functionally, catalyzes the reductive methylation of 2'-deoxyuridine-5'-monophosphate (dUMP) to 2'-deoxythymidine-5'-monophosphate (dTMP) while utilizing 5,10-methylenetetrahydrofolate (mTHF) as the methyl donor and reductant in the reaction, yielding dihydrofolate (DHF) as a by-product. This enzymatic reaction provides an intracellular de novo source of dTMP, an essential precursor for DNA biosynthesis. In Neisseria gonorrhoeae, this protein is Thymidylate synthase.